The chain runs to 87 residues: Neutrophil antibiotic peptide NP-3A (87 aa).

Residues 1–19 (MRTLTLLTTLLLLALHTQA) form the signal peptide. Residues 20–58 (ESPQGSTKEAPDEEQDISVFFGGDKGTALQDAAVKAGVT) constitute a propeptide that is removed on maturation. 3 disulfides stabilise this stretch: Cys-59-Cys-87, Cys-61-Cys-76, and Cys-66-Cys-86.

Belongs to the alpha-defensin family. In terms of tissue distribution, highest expression in bone marrow and to a much lesser extent in small intestine.

The protein localises to the secreted. Functionally, active in vitro against S.aureus, fungi, Gram-positive and Gram-negative bacteria and to a lesser extent against an enveloped virus. The protein is Neutrophil antibiotic peptide NP-3A of Rattus norvegicus (Rat).